The chain runs to 126 residues: Iron-sulfur cluster insertion protein ErpA (126 aa).

Residues 1–21 (MNQPANQFNPSSSQPVDPTVL) form a disordered region. Residues C54, C118, and C120 each coordinate iron-sulfur cluster.

This sequence belongs to the HesB/IscA family. In terms of assembly, homodimer. Iron-sulfur cluster is required as a cofactor.

Its function is as follows. Required for insertion of 4Fe-4S clusters for at least IspG. The chain is Iron-sulfur cluster insertion protein ErpA from Psychrobacter arcticus (strain DSM 17307 / VKM B-2377 / 273-4).